A 195-amino-acid polypeptide reads, in one-letter code: Imidazoleglycerol-phosphate dehydratase (195 aa).

It belongs to the imidazoleglycerol-phosphate dehydratase family.

It is found in the cytoplasm. It carries out the reaction D-erythro-1-(imidazol-4-yl)glycerol 3-phosphate = 3-(imidazol-4-yl)-2-oxopropyl phosphate + H2O. Its pathway is amino-acid biosynthesis; L-histidine biosynthesis; L-histidine from 5-phospho-alpha-D-ribose 1-diphosphate: step 6/9. In Paracoccus denitrificans (strain Pd 1222), this protein is Imidazoleglycerol-phosphate dehydratase.